We begin with the raw amino-acid sequence, 103 residues long: Cell division suppressor protein YneA (103 aa).

The LysM domain occupies 36 to 87 (VKIEVQEGDTLWELADRIKGGKTADKHKFIEWVADKNNLPTSVIKPGDVLIL).

The protein belongs to the YneA family.

Its subcellular location is the cytoplasm. Inhibits cell division during the SOS response. Affects a later stage of the cell division protein assembly, after the assembly of the Z ring, by probably suppressing recruitment of FtsL and/or DivIC to the division machinery. The polypeptide is Cell division suppressor protein YneA (Bacillus licheniformis (strain ATCC 14580 / DSM 13 / JCM 2505 / CCUG 7422 / NBRC 12200 / NCIMB 9375 / NCTC 10341 / NRRL NRS-1264 / Gibson 46)).